We begin with the raw amino-acid sequence, 337 residues long: Casein kinase I isoform alpha (337 aa).

Position 2 is an N-acetylalanine (A2). Phosphoserine is present on S4. At K8 the chain carries N6-acetyllysine. A Protein kinase domain is found at 17-285 (YKLVRKIGSG…YLRQLFRILF (269 aa)). Residues 23 to 31 (IGSGSFGDI) and K46 contribute to the ATP site. D136 (proton acceptor) is an active-site residue. Residues 309–325 (AASSSGQGQQAQTPTGK) are compositionally biased toward low complexity. Residues 309–337 (AASSSGQGQQAQTPTGKQTDKTKSNMKGF) form a disordered region.

Belongs to the protein kinase superfamily. CK1 Ser/Thr protein kinase family. Casein kinase I subfamily. Interacts with the Axin complex. Interacts with TUT1, leading to TUT1 phosphorylation. Interacts with FAM83A, FAM83B, FAM83C, FAM83D, FAM83E, FAM83F, FAM83G and FAM83H (via DUF1669). Interaction with FAM83H recruits CSNK1A1 to keratin filaments. Phosphorylated by MTOR in response to mitogenic stimulation, leading to its activation.

The protein resides in the cytoplasm. Its subcellular location is the cytoskeleton. It is found in the microtubule organizing center. It localises to the centrosome. The protein localises to the chromosome. The protein resides in the centromere. Its subcellular location is the kinetochore. It is found in the nucleus speckle. It localises to the cilium basal body. The protein localises to the spindle. The catalysed reaction is L-seryl-[protein] + ATP = O-phospho-L-seryl-[protein] + ADP + H(+). The enzyme catalyses L-threonyl-[protein] + ATP = O-phospho-L-threonyl-[protein] + ADP + H(+). Functionally, casein kinases are operationally defined by their preferential utilization of acidic proteins such as caseins as substrates. Can phosphorylate a large number of proteins. Participates in Wnt signaling. Phosphorylates CTNNB1 at 'Ser-45'. May phosphorylate PER1 and PER2. May play a role in segregating chromosomes during mitosis. May play a role in keratin cytoskeleton disassembly and thereby, it may regulate epithelial cell migration. Acts as a positive regulator of mTORC1 and mTORC2 signaling in response to nutrients by mediating phosphorylation of DEPTOR inhibitor. Acts as an inhibitor of NLRP3 inflammasome assembly by mediating phosphorylation of NLRP3. The sequence is that of Casein kinase I isoform alpha (Csnk1a1) from Mus musculus (Mouse).